A 522-amino-acid polypeptide reads, in one-letter code: Proactivator polypeptide-like 1 (522 aa).

Residues 1-17 (MLCALILWSGLLGAARA) form the signal peptide. Residues 18–59 (SPISVPRECAKGSEVWCQDLQAAAKCRAVRHCQSAVWNKPTV) constitute a propeptide that is removed on maturation. Positions 19–59 (PISVPRECAKGSEVWCQDLQAAAKCRAVRHCQSAVWNKPTV) constitute a Saposin A-type 1 domain. Saposin B-type domains are found at residues 60 to 144 (KSLP…EPLQ), 183 to 261 (EGAV…ERES), 291 to 371 (LGLT…GSKR), and 393 to 474 (QGSF…HGPK). 3 disulfides stabilise this stretch: C64–C140, C67–C134, and C95–C107. A propeptide spanning residues 146 to 183 (HLAETTSERPLTQEDANEVMAPFLSNGALSFHPSQMPE) is cleaved from the precursor. Cystine bridges form between C187-C257, C190-C251, and C216-C227. N204 carries N-linked (GlcNAc...) asparagine glycosylation. Residues 261 to 290 (SAHWLTRVAAVDGVPSLEMEMPRTNELQMQ) constitute a propeptide that is removed on maturation. 3 cysteine pairs are disulfide-bonded: C295–C367, C298–C361, and C326–C337. N312 is a glycosylation site (N-linked (GlcNAc...) (high mannose) asparagine). Residues 371–392 (RRARSISRAVATTPSLPVDEEN) constitute a propeptide that is removed on maturation. Intrachain disulfides connect C397-C470, C400-C464, and C428-C439. A propeptide spanning residues 475-522 (TPLLGTDQCVMGPSFWCKSPEAAEMCNALEHCQRLVWKKPVSKINEQP) is cleaved from the precursor. The region spanning 476–516 (PLLGTDQCVMGPSFWCKSPEAAEMCNALEHCQRLVWKKPVS) is the Saposin A-type 2 domain.

The protein resides in the secreted. In terms of biological role, may activate the lysosomal degradation of sphingolipids. The sequence is that of Proactivator polypeptide-like 1 (Psapl1) from Mus musculus (Mouse).